A 288-amino-acid chain; its full sequence is MSELRLMAVHAHPDDESSKGAATLARYADEGHRVLVVTLTGGERGEILNPAMDLPDVHGRIAEIRRDEMTKAAEILGVEHTWLGFVDSGLPKGDLPPPLPDDCFARVPLEVSTEALVRVVREFRPHVMTTYDENGGYPHPDHIRCHQVSVAAYEAAGDFCRFPDAGEPWTVSKLYYVHGFLRERMQMLQDEFARHGQRGPFEQWLAYWDPDHDFLTSRVTTRVECSKYFSQRDDALRAHATQIDPNAEFFAAPLAWQERLWPTEEFELARSRIPARPPETELFAGIEP.

Positions 12, 15, and 142 each coordinate Zn(2+).

The protein belongs to the MshB deacetylase family. Mca subfamily. Monomer. Zn(2+) serves as cofactor.

The catalysed reaction is mycothiol S-conjugate + H2O = an N-acetyl-L-cysteine-S-conjugate + 1D-myo-inositol 2-amino-2-deoxy-alpha-D-glucopyranoside. Partially inhibited by MSH when MSmB is used as substrate. Competitively inhibited by the GlcNAc-cyclohexyl derivative 5-(4-chlorophenyl)-N-((2R,3R,4R,5S,6R)-2-(cyclohexylthio)-tetrahydro-4,5-dihydroxy-6-(hydroxymethyl)-2H-pyran-3-yl)furan-2-carboxamide, which also inhibits MshB. A mycothiol (MSH, N-acetyl-cysteinyl-glucosaminyl-inositol) S-conjugate amidase, it recycles conjugated MSH to the N-acetyl cysteine conjugate and the MSH precursor. Involved in MSH-dependent detoxification of a number of alkylating agents and antibiotics. Activity is specific for the mycothiol moiety. Has a low but measurable deacetylation activity on GlcNAc-Ins (N-acetyl-glucosaminyl-inositol), and thus can also directly contribute to the production of MSH. This chain is Mycothiol S-conjugate amidase, found in Mycobacterium tuberculosis (strain ATCC 25618 / H37Rv).